The chain runs to 533 residues: Beta-1,4 N-acetylgalactosaminyltransferase 1 (533 aa).

Over 1–7 (MRLDRRA) the chain is Cytoplasmic. The helical; Signal-anchor for type II membrane protein transmembrane segment at 8-25 (LYALVLLLACASLGLLYA) threads the bilayer. The Lumenal segment spans residues 26-533 (STRDAPGLPN…KHRLQCMTAE (508 aa)). 2 N-linked (GlcNAc...) asparagine glycosylation sites follow: asparagine 79 and asparagine 274. An intrachain disulfide couples cysteine 429 to cysteine 476.

It belongs to the glycosyltransferase 2 family. As to quaternary structure, homodimer; disulfide-linked. As to expression, strongly expressed in brain, testis, spleen, and to a lesser extent in liver.

The protein resides in the golgi apparatus membrane. It catalyses the reaction a ganglioside GM3 (d18:1(4E)) + UDP-N-acetyl-alpha-D-galactosamine = a ganglioside GM2 (d18:1(4E)) + UDP + H(+). The enzyme catalyses a ganglioside GD3 (d18:1(4E)) + UDP-N-acetyl-alpha-D-galactosamine = a ganglioside GD2 (d18:1(4E)) + UDP + H(+). It carries out the reaction a ganglioside GM3 + UDP-N-acetyl-alpha-D-galactosamine = a ganglioside GM2 + UDP + H(+). The catalysed reaction is a ganglioside GD3 + UDP-N-acetyl-alpha-D-galactosamine = a ganglioside GD2 + UDP + H(+). It catalyses the reaction a ganglioside GD1a + UDP-N-acetyl-alpha-D-galactosamine = a ganglioside GalNAc-GD1a + UDP + H(+). The enzyme catalyses a ganglioside GT3 (d18:1(4E)) + UDP-N-acetyl-alpha-D-galactosamine = a ganglioside GT2 (d18:1(4E)) + UDP + H(+). It carries out the reaction a beta-D-Gal-(1-&gt;4)-beta-D-Glc-(1&lt;-&gt;1)-Cer(d18:1(4E)) + UDP-N-acetyl-alpha-D-galactosamine = a ganglioside GA2 (d18:1(4E)) + UDP + H(+). The catalysed reaction is a neolactoside IV(3)-alpha-NeuGc-nLc4Cer + UDP-N-acetyl-alpha-D-galactosamine = a neolactoside IV(4)-beta-GalNAc-IV(3)-alpha-NeuGc-nLc4Cer + UDP + H(+). It participates in sphingolipid metabolism. In terms of biological role, involved in the biosynthesis of gangliosides GM2, GD2, GT2 and GA2 from GM3, GD3, GT3 and GA3, respectively. The polypeptide is Beta-1,4 N-acetylgalactosaminyltransferase 1 (Rattus norvegicus (Rat)).